The following is a 165-amino-acid chain: UPF0114 protein in repA1-repA2 intergenic region (165 aa).

Helical transmembrane passes span 15 to 35, 53 to 73, and 136 to 156; these read LMFP…VKFF, LVLI…LVMV, and IMWC…MAYI.

The protein belongs to the UPF0114 family.

The protein resides in the cell membrane. The sequence is that of UPF0114 protein in repA1-repA2 intergenic region from Buchnera aphidicola subsp. Thelaxes suberi.